A 418-amino-acid polypeptide reads, in one-letter code: Cell division protein FtsA (418 aa).

Belongs to the FtsA/MreB family. Self-interacts. Interacts with FtsZ.

It localises to the cell inner membrane. Its function is as follows. Cell division protein that is involved in the assembly of the Z ring. May serve as a membrane anchor for the Z ring. This Buchnera aphidicola subsp. Acyrthosiphon pisum (strain APS) (Acyrthosiphon pisum symbiotic bacterium) protein is Cell division protein FtsA.